A 310-amino-acid polypeptide reads, in one-letter code: O-acetylserine sulfhydrylase (310 aa).

Lys44 is subject to N6-(pyridoxal phosphate)lysine. Residues Asn74, 178–182 (GTGGT), and Ser266 contribute to the pyridoxal 5'-phosphate site.

It belongs to the cysteine synthase/cystathionine beta-synthase family. Homodimer. Pyridoxal 5'-phosphate serves as cofactor.

The catalysed reaction is O-acetyl-L-serine + hydrogen sulfide = L-cysteine + acetate. It participates in amino-acid biosynthesis; L-cysteine biosynthesis; L-cysteine from L-serine: step 2/2. Its function is as follows. Catalyzes the conversion of O-acetylserine (OAS) to cysteine through the elimination of acetate and addition of hydrogen sulfide. This Mycobacterium bovis (strain ATCC BAA-935 / AF2122/97) protein is O-acetylserine sulfhydrylase (cysK).